A 743-amino-acid chain; its full sequence is Photosystem I P700 chlorophyll a apoprotein A2 (743 aa).

Helical transmembrane passes span 46-69, 135-158, 175-199, 273-291, 336-359, 375-401, 423-445, and 526-544; these read IFATHFGHVAIIFLWASSLLFHVA, LYMGAVFLLILASVFLFAGWLHLQ, LNHHLAGLFGVSSLAWAGHLIHVAI, MAHHHLAIAVIFIIAGHMY, LHFQLGIHLAALGTITSLVAQHMY, AALYTHHQYIAIFLMLGAFAHGAIFWV, AIISHLSWVSLFLGFHTLGLYVH, and FLVHHAFALALHTTVLILV. Residues Cys-568 and Cys-577 each contribute to the [4Fe-4S] cluster site. A run of 2 helical transmembrane segments spans residues 584–605 and 652–674; these read AFYLATFWALNTVGWVTFYWHW and LSVWAWMFLFGHLVWATGFMFLI. Chlorophyll a contacts are provided by His-663, Met-671, and Tyr-679. Residue Trp-680 coordinates phylloquinone. Residues 716–736 form a helical membrane-spanning segment; that stretch reads LVGLTHFTVGYVLTYAAFLIA.

It belongs to the PsaA/PsaB family. The PsaA/B heterodimer binds the P700 chlorophyll special pair and subsequent electron acceptors. PSI consists of a core antenna complex that captures photons, and an electron transfer chain that converts photonic excitation into a charge separation. The cyanobacterial PSI reaction center is composed of one copy each of PsaA,B,C,D,E,F,I,J,K,L,M and X, and forms trimeric complexes. It depends on PSI electron transfer chain: 5 chlorophyll a, 1 chlorophyll a', 2 phylloquinones and 3 4Fe-4S clusters. PSI core antenna: 90 chlorophyll a, 22 carotenoids, 3 phospholipids and 1 galactolipid. P700 is a chlorophyll a/chlorophyll a' dimer, A0 is one or more chlorophyll a, A1 is one or both phylloquinones and FX is a shared 4Fe-4S iron-sulfur center. as a cofactor.

The protein localises to the cellular thylakoid membrane. It catalyses the reaction reduced [plastocyanin] + hnu + oxidized [2Fe-2S]-[ferredoxin] = oxidized [plastocyanin] + reduced [2Fe-2S]-[ferredoxin]. Functionally, psaA and PsaB bind P700, the primary electron donor of photosystem I (PSI), as well as the electron acceptors A0, A1 and FX. PSI is a plastocyanin/cytochrome c6-ferredoxin oxidoreductase, converting photonic excitation into a charge separation, which transfers an electron from the donor P700 chlorophyll pair to the spectroscopically characterized acceptors A0, A1, FX, FA and FB in turn. Oxidized P700 is reduced on the lumenal side of the thylakoid membrane by plastocyanin or cytochrome c6. This Mastigocladus laminosus (Fischerella sp.) protein is Photosystem I P700 chlorophyll a apoprotein A2.